The following is a 122-amino-acid chain: Double-headed protease inhibitor, submandibular gland (122 aa).

Kazal-like domains lie at 10-70 (GGRK…ECDI) and 71-121 (ECTQ…QCQS). 6 disulfides stabilise this stretch: cysteine 16–cysteine 50, cysteine 28–cysteine 47, cysteine 36–cysteine 68, cysteine 72–cysteine 101, cysteine 79–cysteine 98, and cysteine 87–cysteine 119.

The protein resides in the secreted. This inhibitor is composed of two homologous actively inhibiting halves: one which inhibits trypsin, the other which inhibits elastase. The polypeptide is Double-headed protease inhibitor, submandibular gland (Panthera uncia (Snow leopard)).